Reading from the N-terminus, the 219-residue chain is 7-cyano-7-deazaguanine synthase (219 aa).

10–20 contacts ATP; it reads FSGGQDSTTCL. Positions 188, 197, 200, and 203 each coordinate Zn(2+).

It belongs to the QueC family. Homodimer. The cofactor is Zn(2+).

It carries out the reaction 7-carboxy-7-deazaguanine + NH4(+) + ATP = 7-cyano-7-deazaguanine + ADP + phosphate + H2O + H(+). It functions in the pathway purine metabolism; 7-cyano-7-deazaguanine biosynthesis. In terms of biological role, catalyzes the ATP-dependent conversion of 7-carboxy-7-deazaguanine (CDG) to 7-cyano-7-deazaguanine (preQ(0)). This is 7-cyano-7-deazaguanine synthase from Clostridium botulinum (strain 657 / Type Ba4).